Consider the following 317-residue polypeptide: Acetyl-coenzyme A carboxylase carboxyl transferase subunit alpha (317 aa).

In terms of domain architecture, CoA carboxyltransferase C-terminal spans 33 to 294 (NINKEINCLR…KNRILKDLKE (262 aa)).

This sequence belongs to the AccA family. Acetyl-CoA carboxylase is a heterohexamer composed of biotin carboxyl carrier protein (AccB), biotin carboxylase (AccC) and two subunits each of ACCase subunit alpha (AccA) and ACCase subunit beta (AccD).

Its subcellular location is the cytoplasm. The catalysed reaction is N(6)-carboxybiotinyl-L-lysyl-[protein] + acetyl-CoA = N(6)-biotinyl-L-lysyl-[protein] + malonyl-CoA. It participates in lipid metabolism; malonyl-CoA biosynthesis; malonyl-CoA from acetyl-CoA: step 1/1. Functionally, component of the acetyl coenzyme A carboxylase (ACC) complex. First, biotin carboxylase catalyzes the carboxylation of biotin on its carrier protein (BCCP) and then the CO(2) group is transferred by the carboxyltransferase to acetyl-CoA to form malonyl-CoA. The sequence is that of Acetyl-coenzyme A carboxylase carboxyl transferase subunit alpha from Wigglesworthia glossinidia brevipalpis.